We begin with the raw amino-acid sequence, 397 residues long: Ribosomal RNA large subunit methyltransferase I (397 aa).

A PUA domain is found at 2–81 (STTVYLQKDR…EQIDTEFFVR (80 aa)).

It belongs to the methyltransferase superfamily. RlmI family.

The protein resides in the cytoplasm. The enzyme catalyses cytidine(1962) in 23S rRNA + S-adenosyl-L-methionine = 5-methylcytidine(1962) in 23S rRNA + S-adenosyl-L-homocysteine + H(+). Functionally, specifically methylates the cytosine at position 1962 (m5C1962) of 23S rRNA. The protein is Ribosomal RNA large subunit methyltransferase I of Tolumonas auensis (strain DSM 9187 / NBRC 110442 / TA 4).